The chain runs to 175 residues: uncharacterized protein (175 aa).

The next 5 helical transmembrane spans lie at 25–45, 46–66, 97–117, 124–144, and 155–175; these read MIAI…TTIS, ATGP…FFLL, FAGW…LTAV, WLPG…LTLL, and TEFW…VTGI.

Belongs to the amino acid-polyamine-organocation (APC) superfamily.

The protein resides in the cell membrane. This is an uncharacterized protein from Lactobacillus delbrueckii subsp. lactis.